The chain runs to 235 residues: MPFFVNVKISKSVFRSFRLSFSSFQDFSVFFFNSFNCLHSMLKFVNLDSKSQFKSLVESNSFMKDFFWLVSSSILSLNDSLICLRDLICSFLASLEDCNFLHSTNKFSLSSKVKFISFDEFAVSTPLWELLPANSGSTSFVSLLLKILEIENRFVLSPSSPLPHSSAFKLAILVTPFVETLSWLNELSMLFAYCPAELSLSLFFLCLLLWDIFERLVESLDRCVFTRLYSTLWSY.

A run of 2 helical transmembrane segments spans residues 167–187 and 190–210; these read AFKL…LNEL and LFAY…LLLW.

It is found in the membrane. This is an uncharacterized protein from Saccharomyces cerevisiae (strain ATCC 204508 / S288c) (Baker's yeast).